Here is a 164-residue protein sequence, read N- to C-terminus: Cell division protein SepF (164 aa).

Residues 29–57 (INKGRGASQQEYDEYYEDSTPTVTQKEDP) are disordered.

It belongs to the SepF family. Homodimer. Interacts with FtsZ.

Its subcellular location is the cytoplasm. Its function is as follows. Cell division protein that is part of the divisome complex and is recruited early to the Z-ring. Probably stimulates Z-ring formation, perhaps through the cross-linking of FtsZ protofilaments. Its function overlaps with FtsA. This Exiguobacterium sibiricum (strain DSM 17290 / CCUG 55495 / CIP 109462 / JCM 13490 / 255-15) protein is Cell division protein SepF.